The primary structure comprises 287 residues: Formamidopyrimidine-DNA glycosylase (287 aa).

P2 (schiff-base intermediate with DNA) is an active-site residue. The active-site Proton donor is E3. The Proton donor; for beta-elimination activity role is filled by K58. DNA contacts are provided by H104, R123, and R166. The FPG-type zinc-finger motif lies at 251 to 287 (RTYDREGQPCRNDGCRGVIGREVQAGRSTFYCPVCQR). R277 functions as the Proton donor; for delta-elimination activity in the catalytic mechanism.

The protein belongs to the FPG family. Monomer. Zn(2+) is required as a cofactor.

The enzyme catalyses Hydrolysis of DNA containing ring-opened 7-methylguanine residues, releasing 2,6-diamino-4-hydroxy-5-(N-methyl)formamidopyrimidine.. The catalysed reaction is 2'-deoxyribonucleotide-(2'-deoxyribose 5'-phosphate)-2'-deoxyribonucleotide-DNA = a 3'-end 2'-deoxyribonucleotide-(2,3-dehydro-2,3-deoxyribose 5'-phosphate)-DNA + a 5'-end 5'-phospho-2'-deoxyribonucleoside-DNA + H(+). Functionally, involved in base excision repair of DNA damaged by oxidation or by mutagenic agents. Acts as a DNA glycosylase that recognizes and removes damaged bases. Has a preference for oxidized purines, such as 7,8-dihydro-8-oxoguanine (8-oxoG). Has AP (apurinic/apyrimidinic) lyase activity and introduces nicks in the DNA strand. Cleaves the DNA backbone by beta-delta elimination to generate a single-strand break at the site of the removed base with both 3'- and 5'-phosphates. This Phenylobacterium zucineum (strain HLK1) protein is Formamidopyrimidine-DNA glycosylase.